Here is a 342-residue protein sequence, read N- to C-terminus: AA9 family lytic polysaccharide monooxygenase AA9-X282 (342 aa).

The first 18 residues, 1–18 (MKSFASLLFLAATAAAHA), serve as a signal peptide directing secretion. Histidine 17 contributes to the Cu(2+) binding site. Phosphothreonine occurs at positions 19 and 57. Residue serine 59 is modified to Phosphoserine. A disulfide bond links cysteine 63 and cysteine 181. Histidine 93 is a binding site for Cu(2+). O2-binding residues include histidine 167 and glutamine 176. Tyrosine 178 serves as a coordination point for Cu(2+). N-linked (GlcNAc...) asparagine glycosylation occurs at asparagine 189. The tract at residues 233 to 263 (SPATVANTPYPTTATWNTALQPTTVPTVTPP) is X282 extension. The interval 281–302 (VTSQPPVPPTTQQPPVVTPTAP) is disordered. Over residues 285–302 (PPVPPTTQQPPVVTPTAP) the composition is skewed to pro residues. The 37-residue stretch at 306–342 (PLQTQYGQCGGQGWNGPTQCQPPYTCTASNQWYHQCL) folds into the CBM1 domain.

The protein belongs to the polysaccharide monooxygenase AA9 family. Cu(2+) is required as a cofactor.

Its subcellular location is the secreted. The catalysed reaction is [(1-&gt;4)-beta-D-glucosyl]n+m + reduced acceptor + O2 = 4-dehydro-beta-D-glucosyl-[(1-&gt;4)-beta-D-glucosyl]n-1 + [(1-&gt;4)-beta-D-glucosyl]m + acceptor + H2O.. Its function is as follows. Lytic polysaccharide monooxygenase (LPMO) that depolymerizes crystalline and amorphous polysaccharides via the oxidation of scissile alpha- or beta-(1-4)-glycosidic bonds, yielding C1 oxidation products. Catalysis by LPMOs requires the reduction of the active-site copper from Cu(II) to Cu(I) by a reducing agent and H(2)O(2) or O(2) as a cosubstrate. Shows only weak binding properties to cellulose, and low cellulolytic oxidative activity which questions the involvement of X282 extension-containing AA9 proteins in the degradation of plant cell wall and opens new avenues as to the divergence of function of some AA9 members. This chain is AA9 family lytic polysaccharide monooxygenase AA9-X282, found in Coprinopsis cinerea (strain Okayama-7 / 130 / ATCC MYA-4618 / FGSC 9003) (Inky cap fungus).